The following is a 646-amino-acid chain: 1-deoxy-D-xylulose-5-phosphate synthase (646 aa).

Thiamine diphosphate contacts are provided by residues His86 and 127–129; that span reads AHS. Position 158 (Asp158) interacts with Mg(2+). Residues 159-160, Asn188, Tyr295, and Glu377 contribute to the thiamine diphosphate site; that span reads GA. Asn188 serves as a coordination point for Mg(2+).

This sequence belongs to the transketolase family. DXPS subfamily. As to quaternary structure, homodimer. It depends on Mg(2+) as a cofactor. Thiamine diphosphate is required as a cofactor.

The enzyme catalyses D-glyceraldehyde 3-phosphate + pyruvate + H(+) = 1-deoxy-D-xylulose 5-phosphate + CO2. It functions in the pathway metabolic intermediate biosynthesis; 1-deoxy-D-xylulose 5-phosphate biosynthesis; 1-deoxy-D-xylulose 5-phosphate from D-glyceraldehyde 3-phosphate and pyruvate: step 1/1. Catalyzes the acyloin condensation reaction between C atoms 2 and 3 of pyruvate and glyceraldehyde 3-phosphate to yield 1-deoxy-D-xylulose-5-phosphate (DXP). This chain is 1-deoxy-D-xylulose-5-phosphate synthase, found in Burkholderia cenocepacia (strain HI2424).